The sequence spans 219 residues: 7-cyano-7-deazaguanine synthase (219 aa).

10–20 (FSGGQDSTTCL) is an ATP binding site. The Zn(2+) site is built by Cys188, Cys197, Cys200, and Cys203.

The protein belongs to the QueC family. In terms of assembly, homodimer. Requires Zn(2+) as cofactor.

The enzyme catalyses 7-carboxy-7-deazaguanine + NH4(+) + ATP = 7-cyano-7-deazaguanine + ADP + phosphate + H2O + H(+). Its pathway is purine metabolism; 7-cyano-7-deazaguanine biosynthesis. In terms of biological role, catalyzes the ATP-dependent conversion of 7-carboxy-7-deazaguanine (CDG) to 7-cyano-7-deazaguanine (preQ(0)). The chain is 7-cyano-7-deazaguanine synthase from Clostridium botulinum (strain Kyoto / Type A2).